We begin with the raw amino-acid sequence, 167 residues long: SsrA-binding protein (167 aa).

Residues 139 to 158 (QNHDKRDAAKERDWQRDKQR) show a composition bias toward basic and acidic residues. The tract at residues 139-167 (QNHDKRDAAKERDWQRDKQRVMRRHNRDA) is disordered.

Belongs to the SmpB family.

The protein localises to the cytoplasm. In terms of biological role, required for rescue of stalled ribosomes mediated by trans-translation. Binds to transfer-messenger RNA (tmRNA), required for stable association of tmRNA with ribosomes. tmRNA and SmpB together mimic tRNA shape, replacing the anticodon stem-loop with SmpB. tmRNA is encoded by the ssrA gene; the 2 termini fold to resemble tRNA(Ala) and it encodes a 'tag peptide', a short internal open reading frame. During trans-translation Ala-aminoacylated tmRNA acts like a tRNA, entering the A-site of stalled ribosomes, displacing the stalled mRNA. The ribosome then switches to translate the ORF on the tmRNA; the nascent peptide is terminated with the 'tag peptide' encoded by the tmRNA and targeted for degradation. The ribosome is freed to recommence translation, which seems to be the essential function of trans-translation. The polypeptide is SsrA-binding protein (Xanthomonas oryzae pv. oryzae (strain MAFF 311018)).